A 449-amino-acid chain; its full sequence is Maturation protein A (449 aa).

This sequence belongs to the Leviviricetes maturation protein family. In terms of assembly, interacts with the host pilus.

Its subcellular location is the virion. The maturation protein is required for the typical attachment of the phage to the side of the bacterial F-pili. Binds to sequences located toward each end of the genome, hence circularizing it. The RNA genome-maturation protein A complex is released from the capsid upon host receptor binding. Maturation protein A enters the cell along with the viral RNA. The protein is Maturation protein A of Pseudomonas aeruginosa (Bacteriophage PP7).